The following is a 282-amino-acid chain: Pantothenate synthetase (282 aa).

Residue 30–37 participates in ATP binding; that stretch reads MGFLHDGH. His-37 functions as the Proton donor in the catalytic mechanism. Gln-60 is a (R)-pantoate binding site. Gln-60 lines the beta-alanine pocket. Residue 146–149 coordinates ATP; it reads GQKD. (R)-pantoate is bound at residue Gln-152. Residues Ile-175 and 183 to 186 each bind ATP; that span reads KSSR.

This sequence belongs to the pantothenate synthetase family. In terms of assembly, homodimer.

The protein resides in the cytoplasm. The enzyme catalyses (R)-pantoate + beta-alanine + ATP = (R)-pantothenate + AMP + diphosphate + H(+). It participates in cofactor biosynthesis; (R)-pantothenate biosynthesis; (R)-pantothenate from (R)-pantoate and beta-alanine: step 1/1. Functionally, catalyzes the condensation of pantoate with beta-alanine in an ATP-dependent reaction via a pantoyl-adenylate intermediate. The protein is Pantothenate synthetase of Campylobacter jejuni (strain RM1221).